The sequence spans 332 residues: 3-dehydroquinate synthase (332 aa).

Residues 55–60 (DGEEYK), 89–93 (GVITD), 113–114 (TT), lysine 126, lysine 134, and 152–155 (TLST) each bind NAD(+). Zn(2+) contacts are provided by glutamate 167, histidine 226, and histidine 242.

Belongs to the sugar phosphate cyclases superfamily. Dehydroquinate synthase family. NAD(+) serves as cofactor. Requires Co(2+) as cofactor. The cofactor is Zn(2+).

The protein resides in the cytoplasm. The catalysed reaction is 7-phospho-2-dehydro-3-deoxy-D-arabino-heptonate = 3-dehydroquinate + phosphate. It participates in metabolic intermediate biosynthesis; chorismate biosynthesis; chorismate from D-erythrose 4-phosphate and phosphoenolpyruvate: step 2/7. Catalyzes the conversion of 3-deoxy-D-arabino-heptulosonate 7-phosphate (DAHP) to dehydroquinate (DHQ). The polypeptide is 3-dehydroquinate synthase (Pyrococcus abyssi (strain GE5 / Orsay)).